We begin with the raw amino-acid sequence, 477 residues long: Ankyrin repeat, SAM and basic leucine zipper domain-containing protein 1 (477 aa).

A disordered region spans residues 1-24 (MAASSLWGPAVAGGGESSESEDDG). Phosphoserine occurs at positions 17, 18, and 20. ANK repeat units lie at residues 45 to 74 (EKNE…SVDS), 78 to 107 (YGWT…NASF), 110 to 144 (DKQT…DPNV), 148 to 177 (RQMT…EVNA), 181 to 210 (NGYT…NKML), and 214 to 243 (DGKT…PLEG). The SAM domain occupies 272-334 (SYTAFGELDL…KILSALKELM (63 aa)).

Interacts with DDX4, PIWIL1, RANBP9 and TDRD1.

The protein resides in the cytoplasm. Its function is as follows. Plays a central role during spermatogenesis by repressing transposable elements and preventing their mobilization, which is essential for the germline integrity. Acts via the piRNA metabolic process, which mediates the repression of transposable elements during meiosis by forming complexes composed of piRNAs and Piwi proteins and governs the methylation and subsequent repression of transposons. Its association with pi-bodies suggests a participation in the primary piRNAs metabolic process. Required prior to the pachytene stage to facilitate the production of multiple types of piRNAs, including those associated with repeats involved in the regulation of retrotransposons. May act by mediating protein-protein interactions during germ cell maturation. The polypeptide is Ankyrin repeat, SAM and basic leucine zipper domain-containing protein 1 (ASZ1) (Echinops telfairi (Lesser hedgehog tenrec)).